Consider the following 486-residue polypeptide: Protein ZINC INDUCED FACILITATOR 1 (486 aa).

12 helical membrane-spanning segments follow: residues Phe41 to Tyr61, Phe82 to Ala102, Pro109 to Ser129, Phe131 to Met151, Ala170 to Ala190, Ala212 to Ile232, Ile288 to Trp308, Thr327 to Ala347, Ala362 to Leu384, Ile391 to Gln408, Ile423 to Phe443, and Val461 to Leu481.

Belongs to the major facilitator superfamily. As to expression, strongly expressed in developing leaves, differentiating zones of root tips and sepals of developing flowers. Restricted to vascular tissues in older leaves, mature roots, flowers, anthers and filaments. Not expressed in developing anthers.

The protein localises to the vacuole membrane. Major facilitator superfamily (MFS) transporter involved in zinc tolerance by participating in vacuolar sequestration of zinc. The sequence is that of Protein ZINC INDUCED FACILITATOR 1 (ZIF1) from Arabidopsis thaliana (Mouse-ear cress).